The chain runs to 711 residues: Polyribonucleotide nucleotidyltransferase (711 aa).

Mg(2+) contacts are provided by D486 and D492. One can recognise a KH domain in the interval 553–612; sequence PRIHTIKINPDKIKDVIGKGGSVIRALTEETGTTIEIEDDGTVKIAATDGEKAKHAIRRI. Positions 622-690 constitute an S1 motif domain; that stretch reads GRIYNGKVTR…RQGRVRLSIK (69 aa). A disordered region spans residues 690–711; it reads KEATEQSQPAAAPEAPAAEQGE. Over residues 694–711 the composition is skewed to low complexity; it reads EQSQPAAAPEAPAAEQGE.

This sequence belongs to the polyribonucleotide nucleotidyltransferase family. Component of the RNA degradosome, which is a multiprotein complex involved in RNA processing and mRNA degradation. It depends on Mg(2+) as a cofactor.

It is found in the cytoplasm. The catalysed reaction is RNA(n+1) + phosphate = RNA(n) + a ribonucleoside 5'-diphosphate. In terms of biological role, involved in mRNA degradation. Catalyzes the phosphorolysis of single-stranded polyribonucleotides processively in the 3'- to 5'-direction. This Citrobacter koseri (strain ATCC BAA-895 / CDC 4225-83 / SGSC4696) protein is Polyribonucleotide nucleotidyltransferase.